Consider the following 250-residue polypeptide: MAGHSKWANIKHKKARVDEKRGKLFSKLSKEIIVAAKEGGGDPEKNFRLRMAVQKAKENNMPNDNIERAIKKGTGELKGFNYEEISYEGYGPGGVAIFLDAMTDNKNRTASEVRHIFTKNDGNLGEDGCVAWMFDRKGLITIDKEQAENIDEEELMLLTAEAGAEDFKSDNNSIEIVTTPQDFEQVREALENEEVPLSYKEVTMIPSNTVKVEGEEAKKVLQLMEELEDHDDVQNVYANFDIDDSLMETG.

The protein belongs to the TACO1 family.

It localises to the cytoplasm. This is Probable transcriptional regulatory protein Nther_1800 from Natranaerobius thermophilus (strain ATCC BAA-1301 / DSM 18059 / JW/NM-WN-LF).